Reading from the N-terminus, the 166-residue chain is FMN reductase (NADH) RutF (166 aa).

Belongs to the non-flavoprotein flavin reductase family. RutF subfamily.

It catalyses the reaction FMNH2 + NAD(+) = FMN + NADH + 2 H(+). Functionally, catalyzes the reduction of FMN to FMNH2 which is used to reduce pyrimidine by RutA via the Rut pathway. The protein is FMN reductase (NADH) RutF of Cronobacter sakazakii (strain ATCC BAA-894) (Enterobacter sakazakii).